A 925-amino-acid polypeptide reads, in one-letter code: Calpain-B (925 aa).

A Calpain catalytic domain is found at 259–558 (MFEDPDFPAT…FDRVEICNLS (300 aa)). Catalysis depends on residues cysteine 314, histidine 470, and asparagine 498. Residues 559-728 (PDSLTEDQQH…TRNNMEENDD (170 aa)) are domain III. Residues 723–753 (MEENDDEVGFGETDDRIAPSLPPPTPKEEDD) form a disordered region. Positions 729 to 748 (EVGFGETDDRIAPSLPPPTP) are linker. Residues 749–925 (KEEDDPQRIA…DDWLERTIYS (177 aa)) form a domain IV region. EF-hand domains are found at residues 796–831 (FSKDAVRSMVAMLDKDRSGRLGFEEFEALLTDIAKW) and 826–861 (TDIAKWRAVFKLYDTRRTGSIDGFHLRGALNSAGYH). Positions 809, 811, 813, 815, 820, 839, 843, 845, and 850 each coordinate Ca(2+).

Belongs to the peptidase C2 family. Post-translationally, undergoes calcium-dependent autolytic cleavage between Asn-74 and Ala-75 and between Gln-224 and Asn-225 to produce two major products, calpain B catalytic subunit 1 and calpain B catalytic subunit 2. This autolysis is necessary for activation of the protein. In terms of tissue distribution, strongly expressed in follicular and border cells of the oocyte. Ubiquitously expressed in early embryos. Localized to the trachea and their orifices, and to the larynx of late embryos. Restricted to the salivary gland in third instar larvae.

It is found in the cytoplasm. Its subcellular location is the membrane. With respect to regulation, activated by millimolar concentrations of calcium. Functionally, calcium-regulated non-lysosomal thiol-protease. In Drosophila melanogaster (Fruit fly), this protein is Calpain-B.